A 140-amino-acid polypeptide reads, in one-letter code: Ctenidin-1 (140 aa).

The first 19 residues, 1–19 (MKHLIPLIVMASVVLAVYA), serve as a signal peptide directing secretion. Position 138 is a glycine amide (Gly138).

It belongs to the glycine-rich peptide family. Expressed in hemocytes (at protein level).

The protein resides in the secreted. Antimicrobial protein with bacteriostatic activity against the Gram-negative bacterium E.coli, and very weak activity against the Gram-positive bacterium S.aureus. Lacks activity against the yeast C.albicans. In Cupiennius salei (American wandering spider), this protein is Ctenidin-1.